The primary structure comprises 344 residues: Glucan endo-1,3-beta-glucosidase (344 aa).

The N-terminal stretch at 1 to 27 (MALTRNRPFVVVLLLGFVIMSTITIGA) is a signal peptide. Catalysis depends on E123, which acts as the Proton donor. The active-site Nucleophile is E268.

Belongs to the glycosyl hydrolase 17 family.

The enzyme catalyses Hydrolysis of (1-&gt;3)-beta-D-glucosidic linkages in (1-&gt;3)-beta-D-glucans.. Its function is as follows. Implicated in the defense of plants against pathogens. This chain is Glucan endo-1,3-beta-glucosidase, found in Vitis vinifera (Grape).